Here is a 145-residue protein sequence, read N- to C-terminus: uncharacterized protein (145 aa).

Residues 78-145 form the ACT domain; that stretch reads KLQIVAKDRI…DVVEKISILW (68 aa).

This is an uncharacterized protein from Methanocaldococcus jannaschii (strain ATCC 43067 / DSM 2661 / JAL-1 / JCM 10045 / NBRC 100440) (Methanococcus jannaschii).